A 693-amino-acid chain; its full sequence is Phosphoribosylformylglycinamidine synthase subunit PurL (693 aa).

The active site involves histidine 34. ATP is bound by residues tyrosine 37 and lysine 76. Glutamate 78 contributes to the Mg(2+) binding site. Substrate contacts are provided by residues 79–82 and arginine 101; that span reads SHNH. The active-site Proton acceptor is histidine 80. Aspartate 102 lines the Mg(2+) pocket. Residue glutamine 222 participates in substrate binding. Aspartate 248 contacts Mg(2+). Substrate is bound at residue 292-294; the sequence is ETQ. The ATP site is built by aspartate 470 and glycine 507. Substrate is bound at residue serine 510.

The protein belongs to the FGAMS family. Monomer. Part of the FGAM synthase complex composed of 1 PurL, 1 PurQ and 2 PurS subunits.

The protein localises to the cytoplasm. It carries out the reaction N(2)-formyl-N(1)-(5-phospho-beta-D-ribosyl)glycinamide + L-glutamine + ATP + H2O = 2-formamido-N(1)-(5-O-phospho-beta-D-ribosyl)acetamidine + L-glutamate + ADP + phosphate + H(+). It participates in purine metabolism; IMP biosynthesis via de novo pathway; 5-amino-1-(5-phospho-D-ribosyl)imidazole from N(2)-formyl-N(1)-(5-phospho-D-ribosyl)glycinamide: step 1/2. In terms of biological role, part of the phosphoribosylformylglycinamidine synthase complex involved in the purines biosynthetic pathway. Catalyzes the ATP-dependent conversion of formylglycinamide ribonucleotide (FGAR) and glutamine to yield formylglycinamidine ribonucleotide (FGAM) and glutamate. The FGAM synthase complex is composed of three subunits. PurQ produces an ammonia molecule by converting glutamine to glutamate. PurL transfers the ammonia molecule to FGAR to form FGAM in an ATP-dependent manner. PurS interacts with PurQ and PurL and is thought to assist in the transfer of the ammonia molecule from PurQ to PurL. The chain is Phosphoribosylformylglycinamidine synthase subunit PurL from Pyrobaculum neutrophilum (strain DSM 2338 / JCM 9278 / NBRC 100436 / V24Sta) (Thermoproteus neutrophilus).